Here is a 108-residue protein sequence, read N- to C-terminus: Protein phosphatase 1 regulatory subunit 1C (108 aa).

The disordered stretch occupies residues 25 to 108; sequence AEQIRKRRPT…ASEREEKWNH (84 aa). The segment covering 45-54 has biased composition (basic and acidic residues); it reads NSPEIDEKRV. A compositionally biased stretch (polar residues) spans 55–73; that stretch reads TNTQESQNASPKQRKQSVY. A compositionally biased stretch (basic and acidic residues) spans 99–108; it reads ASEREEKWNH.

The protein belongs to the protein phosphatase inhibitor 1 family.

The protein localises to the cytoplasm. In terms of biological role, may increase cell susceptibility to TNF-induced apoptosis. This Mus musculus (Mouse) protein is Protein phosphatase 1 regulatory subunit 1C (Ppp1r1c).